Consider the following 502-residue polypeptide: Mannitol 2-dehydrogenase (502 aa).

Position 37–48 (37–48 (IVHVGVGGFHRA)) interacts with NAD(+).

This sequence belongs to the mannitol dehydrogenase family. Monomer.

The catalysed reaction is D-mannitol + NAD(+) = D-fructose + NADH + H(+). Functionally, catalyzes the NAD(H)-dependent interconversion of D-fructose and D-mannitol in the mannitol metabolic pathway. This is Mannitol 2-dehydrogenase from Aspergillus oryzae (strain ATCC 42149 / RIB 40) (Yellow koji mold).